Reading from the N-terminus, the 314-residue chain is Tetraacyldisaccharide 4'-kinase (314 aa).

ATP is bound at residue Ile-61–Thr-68.

This sequence belongs to the LpxK family.

It catalyses the reaction a lipid A disaccharide + ATP = a lipid IVA + ADP + H(+). It functions in the pathway glycolipid biosynthesis; lipid IV(A) biosynthesis; lipid IV(A) from (3R)-3-hydroxytetradecanoyl-[acyl-carrier-protein] and UDP-N-acetyl-alpha-D-glucosamine: step 6/6. Transfers the gamma-phosphate of ATP to the 4'-position of a tetraacyldisaccharide 1-phosphate intermediate (termed DS-1-P) to form tetraacyldisaccharide 1,4'-bis-phosphate (lipid IVA). The chain is Tetraacyldisaccharide 4'-kinase from Aliarcobacter butzleri (strain RM4018) (Arcobacter butzleri).